Reading from the N-terminus, the 81-residue chain is Large ribosomal subunit protein bL31B (81 aa).

The protein belongs to the bacterial ribosomal protein bL31 family. Type B subfamily. Part of the 50S ribosomal subunit.

This is Large ribosomal subunit protein bL31B from Lactococcus lactis subsp. lactis (strain IL1403) (Streptococcus lactis).